A 165-amino-acid chain; its full sequence is Neurotrophin-3 (165 aa).

The signal sequence occupies residues 1–3 (IQS). A propeptide spanning residues 4–119 (TSMDQGSLSE…VLNRTSRRKR (116 aa)) is cleaved from the precursor. The disordered stretch occupies residues 32-61 (KVPKQAARTKDGTQTTAKKTEAEPEATANK). Asn112 carries an N-linked (GlcNAc...) asparagine glycan.

Belongs to the NGF-beta family.

It is found in the secreted. Functionally, seems to promote the survival of visceral and proprioceptive sensory neurons. In Xenopeltis unicolor (Sunbeam snake), this protein is Neurotrophin-3 (NTF3).